A 73-amino-acid chain; its full sequence is Potassium channel toxin alpha-KTx 27.1 (73 aa).

The first 23 residues, 1–23 (MKFLFLTLFVCCFIAVLVIPSEA), serve as a signal peptide directing secretion.

Belongs to the short scorpion toxin superfamily. Potassium channel inhibitor family. Alpha-KTx 27 subfamily. In terms of processing, contains 4 disulfide bonds. Expressed by the venom gland.

It is found in the secreted. This is Potassium channel toxin alpha-KTx 27.1 from Buthus israelis (Israeli scorpion).